Consider the following 352-residue polypeptide: Glycerol-1-phosphate dehydrogenase [NAD(P)+] (352 aa).

NAD(+) is bound by residues 91–95 (GRVID) and 113–116 (TVAS). Residue aspartate 118 participates in substrate binding. An NAD(+)-binding site is contributed by serine 122. Residue glutamate 169 participates in substrate binding. Residues glutamate 169 and histidine 249 each contribute to the Zn(2+) site. Histidine 253 lines the substrate pocket. Histidine 269 contributes to the Zn(2+) binding site.

It belongs to the glycerol-1-phosphate dehydrogenase family. As to quaternary structure, homodimer. The cofactor is Zn(2+).

The protein resides in the cytoplasm. The catalysed reaction is sn-glycerol 1-phosphate + NAD(+) = dihydroxyacetone phosphate + NADH + H(+). It carries out the reaction sn-glycerol 1-phosphate + NADP(+) = dihydroxyacetone phosphate + NADPH + H(+). Its pathway is membrane lipid metabolism; glycerophospholipid metabolism. Its function is as follows. Catalyzes the NAD(P)H-dependent reduction of dihydroxyacetonephosphate (DHAP or glycerone phosphate) to glycerol 1-phosphate (G1P). The G1P thus generated is used as the glycerophosphate backbone of phospholipids in the cellular membranes of Archaea. The protein is Glycerol-1-phosphate dehydrogenase [NAD(P)+] of Caldivirga maquilingensis (strain ATCC 700844 / DSM 13496 / JCM 10307 / IC-167).